Consider the following 395-residue polypeptide: Tryptophan--tRNA ligase (395 aa).

ATP-binding positions include Arg8 to Thr10 and Gly16 to His17. The 'HIGH' region signature appears at Pro9–His17. The insert stretch occupies residues Arg117–Leu179. Asp204 is a binding site for L-tryptophan. Residues Gly216–Asp218, Ile254, and Lys261–Ser265 each bind ATP. The 'KMSKS' region motif lies at Lys261–Ser265.

This sequence belongs to the class-I aminoacyl-tRNA synthetase family. In terms of assembly, homodimer.

Its subcellular location is the cytoplasm. The catalysed reaction is tRNA(Trp) + L-tryptophan + ATP = L-tryptophyl-tRNA(Trp) + AMP + diphosphate + H(+). Its function is as follows. Catalyzes the attachment of tryptophan to tRNA(Trp). The polypeptide is Tryptophan--tRNA ligase (Aquifex aeolicus (strain VF5)).